The chain runs to 467 residues: Transcriptional regulator of yeast form adherence 6 (467 aa).

A compositionally biased stretch (polar residues) spans Asn43 to Thr52. Disordered stretches follow at residues Asn43–Ser83, Gly128–Asn149, Glu245–Ser275, Asn312–Lys365, and Ser390–Arg439. In terms of domain architecture, bHLH spans Glu92–Leu173. Low complexity-rich tracts occupy residues Val257–Ser275 and Asn312–Asn322. The span at Pro323–Pro338 shows a compositional bias: polar residues. A compositionally biased stretch (low complexity) spans Ser345–Lys365. Polar residues predominate over residues Gly417 to Asp432.

The protein localises to the nucleus. Functionally, transcription factor required for yeast cell adherence to silicone substrate. In Candida albicans (strain SC5314 / ATCC MYA-2876) (Yeast), this protein is Transcriptional regulator of yeast form adherence 6 (TRY6).